The chain runs to 494 residues: Glycosyl hydrolase family 109 protein (494 aa).

Positions 1–32 (MNDDARPAPEPQDIPPHSGAADEVNRQDPSRR) are disordered. A signal peptide (tat-type signal) is located at residues 1 to 58 (MNDDARPAPEPQDIPPHSGAADEVNRQDPSRRSVLWTTAGVAGAGLGLGALGAGTASA). Residues 104-105 (NR), Asp-126, 175-178 (WELH), 195-196 (EC), and Asn-224 contribute to the NAD(+) site. Residues Tyr-253, Arg-272, 284–287 (YPNH), and Tyr-366 each bind substrate. Tyr-284 contributes to the NAD(+) binding site.

It belongs to the Gfo/Idh/MocA family. Glycosyl hydrolase 109 subfamily. NAD(+) serves as cofactor. In terms of processing, predicted to be exported by the Tat system. The position of the signal peptide cleavage has not been experimentally proven.

Functionally, glycosidase. This Streptomyces filamentosus (Streptomyces roseosporus) protein is Glycosyl hydrolase family 109 protein.